The chain runs to 151 residues: Putative pre-16S rRNA nuclease (151 aa).

It belongs to the YqgF nuclease family.

It localises to the cytoplasm. Could be a nuclease involved in processing of the 5'-end of pre-16S rRNA. The chain is Putative pre-16S rRNA nuclease from Gloeothece citriformis (strain PCC 7424) (Cyanothece sp. (strain PCC 7424)).